Here is a 626-residue protein sequence, read N- to C-terminus: Chaperone protein DnaK (626 aa).

Position 175 is a phosphothreonine; by autocatalysis (Thr175). Over residues 586–606 (GAEGAAAGADGAGASAGSASG) the composition is skewed to low complexity. A disordered region spans residues 586 to 626 (GAEGAAAGADGAGASAGSASGSDDDTVEAEVVDDDDDKDNK). Positions 607 to 626 (SDDDTVEAEVVDDDDDKDNK) are enriched in acidic residues.

This sequence belongs to the heat shock protein 70 family.

Its function is as follows. Acts as a chaperone. The sequence is that of Chaperone protein DnaK from Bifidobacterium longum (strain DJO10A).